The following is a 416-amino-acid chain: Tyrosine--tRNA ligase (416 aa).

L-tyrosine is bound at residue Tyr-34. Positions 39–48 match the 'HIGH' region motif; that stretch reads PTGDSLHIGH. Positions 165 and 169 each coordinate L-tyrosine. Residues 227–231 carry the 'KMSKS' region motif; sequence KFGKT. Lys-230 lines the ATP pocket. The 68-residue stretch at 349 to 416 folds into the S4 RNA-binding domain; the sequence is ENIIIWLTDN…KKHYYLARVK (68 aa).

It belongs to the class-I aminoacyl-tRNA synthetase family. TyrS type 1 subfamily. Homodimer.

The protein localises to the cytoplasm. The enzyme catalyses tRNA(Tyr) + L-tyrosine + ATP = L-tyrosyl-tRNA(Tyr) + AMP + diphosphate + H(+). Catalyzes the attachment of tyrosine to tRNA(Tyr) in a two-step reaction: tyrosine is first activated by ATP to form Tyr-AMP and then transferred to the acceptor end of tRNA(Tyr). The protein is Tyrosine--tRNA ligase of Limosilactobacillus reuteri (strain DSM 20016) (Lactobacillus reuteri).